A 330-amino-acid polypeptide reads, in one-letter code: Ribosomal RNA small subunit methyltransferase C (330 aa).

The protein belongs to the methyltransferase superfamily. RsmC family. As to quaternary structure, monomer.

The protein resides in the cytoplasm. It carries out the reaction guanosine(1207) in 16S rRNA + S-adenosyl-L-methionine = N(2)-methylguanosine(1207) in 16S rRNA + S-adenosyl-L-homocysteine + H(+). In terms of biological role, specifically methylates the guanine in position 1207 of 16S rRNA in the 30S particle. The polypeptide is Ribosomal RNA small subunit methyltransferase C (Haemophilus influenzae (strain 86-028NP)).